The following is a 55-amino-acid chain: Ferredoxin-1 (55 aa).

2 consecutive 4Fe-4S ferredoxin-type domains span residues 2–27 and 28–55; these read YKIE…EQGD and TIFV…PVAE. [4Fe-4S] cluster-binding residues include Cys-8, Cys-11, Cys-14, Cys-18, Cys-37, Cys-40, Cys-43, and Cys-47.

Requires [4Fe-4S] cluster as cofactor.

Its function is as follows. Ferredoxins are iron-sulfur proteins that transfer electrons in a wide variety of metabolic reactions. This is Ferredoxin-1 from Rhodospirillum rubrum.